The sequence spans 355 residues: MSASLLVRTACGGRAVAQRLRTVLWPITQTSVVAGLAWYLTHDVFNHPQAFFAPISAVVCMSATNVLRARRAQQMIVGVALGIVLGAGVHALLGSGPIAMGVVVFIALSVAVLCARGLVAQGLMFINQAAVSAVLVLVFASNGSVVFERLFDALVGGGLAIVFSILLFPPDPVVMLCSARADVLAAVRDILAELVNTVSDPTSAPPDWPMAAADRLHQQLNGLIEVRANAAMVARRAPRRWGVRSTVRDLDQQAVYLALLVSSVLHLARTIAGPGGDKLPTPVHAVLTDLAAGTGLADADPTAANEHAAAARATASTLQSAACGSNEVVRADIVQACVTDLQRVIERPGPSGMSA.

Helical transmembrane passes span 22–42 (TVLW…YLTH), 44–64 (VFNH…MSAT), 71–91 (RAQQ…GVHA), 92–112 (LLGS…SVAV), 119–139 (VAQG…VLVF), and 150–170 (LFDA…LFPP).

Its subcellular location is the cell membrane. May be involved in the import of arylamide compounds. The sequence is that of Putative arylamide transporter from Mycobacterium bovis (strain ATCC BAA-935 / AF2122/97).